A 252-amino-acid polypeptide reads, in one-letter code: Imidazole glycerol phosphate synthase subunit HisF (252 aa).

Active-site residues include D13 and D132.

It belongs to the HisA/HisF family. Heterodimer of HisH and HisF.

The protein localises to the cytoplasm. It carries out the reaction 5-[(5-phospho-1-deoxy-D-ribulos-1-ylimino)methylamino]-1-(5-phospho-beta-D-ribosyl)imidazole-4-carboxamide + L-glutamine = D-erythro-1-(imidazol-4-yl)glycerol 3-phosphate + 5-amino-1-(5-phospho-beta-D-ribosyl)imidazole-4-carboxamide + L-glutamate + H(+). The protein operates within amino-acid biosynthesis; L-histidine biosynthesis; L-histidine from 5-phospho-alpha-D-ribose 1-diphosphate: step 5/9. In terms of biological role, IGPS catalyzes the conversion of PRFAR and glutamine to IGP, AICAR and glutamate. The HisF subunit catalyzes the cyclization activity that produces IGP and AICAR from PRFAR using the ammonia provided by the HisH subunit. The sequence is that of Imidazole glycerol phosphate synthase subunit HisF from Campylobacter curvus (strain 525.92).